Consider the following 338-residue polypeptide: Nicotinate-nucleotide--dimethylbenzimidazole phosphoribosyltransferase (338 aa).

Residue glutamate 305 is the Proton acceptor of the active site.

This sequence belongs to the CobT family.

It carries out the reaction 5,6-dimethylbenzimidazole + nicotinate beta-D-ribonucleotide = alpha-ribazole 5'-phosphate + nicotinate + H(+). Its pathway is nucleoside biosynthesis; alpha-ribazole biosynthesis; alpha-ribazole from 5,6-dimethylbenzimidazole: step 1/2. Catalyzes the synthesis of alpha-ribazole-5'-phosphate from nicotinate mononucleotide (NAMN) and 5,6-dimethylbenzimidazole (DMB). This Rhizobium etli (strain CIAT 652) protein is Nicotinate-nucleotide--dimethylbenzimidazole phosphoribosyltransferase.